Reading from the N-terminus, the 973-residue chain is Translation initiation factor IF-2 (973 aa).

A compositionally biased stretch (basic and acidic residues) spans 97–135 (GHIDLDGGQHKKQQEEPKAKEEPKVKEEPKVKEEPKVKE). 2 disordered regions span residues 97-343 (GHID…EDVQ) and 353-372 (LTNKNNKNNKGAKYRRDKRD). A compositionally biased stretch (low complexity) spans 136-155 (APAAPAAQAPVKPAQPAQAP). Composition is skewed to basic and acidic residues over residues 156 to 175 (TEKKEEKVIVVEVEKEKTVE), 183 to 204 (PKVESVKPEQEVEKTEEKDDNL), 212 to 224 (LESKIKVTGKIDL), and 237 to 250 (TKEEKRKERDEKQK). Low complexity predominate over residues 252–266 (NNNRPGNNSNGPGAP). Basic and acidic residues-rich tracts occupy residues 315–326 (PNRDDRPNNDRK) and 333–343 (VKAEVSEEDVQ). The tr-type G domain maps to 472 to 642 (ARPPIVTVMG…LLEADLLDLK (171 aa)). Residues 481 to 488 (GHVDHGKT) form a G1 region. 481–488 (GHVDHGKT) contacts GTP. Residues 506–510 (GITQH) form a G2 region. A G3 region spans residues 528-531 (DTPG). GTP-binding positions include 528 to 532 (DTPGH) and 582 to 585 (NKID). Residues 582 to 585 (NKID) form a G4 region. The segment at 618 to 620 (SAK) is G5.

The protein belongs to the TRAFAC class translation factor GTPase superfamily. Classic translation factor GTPase family. IF-2 subfamily.

It localises to the cytoplasm. In terms of biological role, one of the essential components for the initiation of protein synthesis. Protects formylmethionyl-tRNA from spontaneous hydrolysis and promotes its binding to the 30S ribosomal subunits. Also involved in the hydrolysis of GTP during the formation of the 70S ribosomal complex. The chain is Translation initiation factor IF-2 from Parabacteroides distasonis (strain ATCC 8503 / DSM 20701 / CIP 104284 / JCM 5825 / NCTC 11152).